A 329-amino-acid chain; its full sequence is Quinone oxidoreductase (329 aa).

Position 2 is an N-acetylalanine (alanine 2). Residue lysine 23 is modified to N6-acetyllysine. Residues tyrosine 53, 158 to 161 (SGGV), glycine 181, histidine 200, asparagine 229, 246 to 249 (VGCR), and 269 to 271 (VSL) contribute to the NADP(+) site. Residue lysine 296 is modified to N6-succinyllysine.

Belongs to the zinc-containing alcohol dehydrogenase family. Quinone oxidoreductase subfamily. In terms of assembly, homotetramer.

The protein resides in the cytoplasm. It carries out the reaction 2 a quinone + NADPH + H(+) = 2 a 1,4-benzosemiquinone + NADP(+). Does not have alcohol dehydrogenase activity. Binds NADP and acts through a one-electron transfer process. Orthoquinones, such as 1,2-naphthoquinone or 9,10-phenanthrenequinone, are the best substrates (in vitro). May act in the detoxification of xenobiotics. Interacts with (AU)-rich elements (ARE) in the 3'-UTR of target mRNA species and enhances their stability. NADPH binding interferes with mRNA binding. The chain is Quinone oxidoreductase (Cryz) from Rattus norvegicus (Rat).